The following is a 330-amino-acid chain: BTB/POZ domain-containing adapter for CUL3-mediated RhoA degradation protein 1 (330 aa).

The disordered stretch occupies residues 1-34; the sequence is MSAEASGSSGGHAVTVSGSSPSSSSHVGEEKPGR. A BTB domain is found at 40-108; it reads KYVKLNVGGT…LRDGTVPLPD (69 aa). Residues 282–291 are compositionally biased toward low complexity; that stretch reads GGVSSSGAGQ. The tract at residues 282 to 304 is disordered; it reads GGVSSSGAGQSEEEGAGAGGGDR.

Belongs to the BACURD family.

It is found in the nucleus. In terms of biological role, substrate-specific adapter of a BCR (BTB-CUL3-RBX1) E3 ubiquitin-protein ligase complex required for synaptic transmission. The BCR(KCTD13) E3 ubiquitin ligase complex mediates the ubiquitination of RHOA, leading to its degradation by the proteasome, thereby regulating the actin cytoskeleton and promoting synaptic transmission. This chain is BTB/POZ domain-containing adapter for CUL3-mediated RhoA degradation protein 1, found in Danio rerio (Zebrafish).